A 249-amino-acid polypeptide reads, in one-letter code: Pleckstrin homology domain-containing family F member 2 (249 aa).

A Phosphoserine modification is found at S16. The PH domain maps to 35–131 (VLIGEGVLTK…WMNHINKCVT (97 aa)). N6-acetyllysine is present on K44. The FYVE-type zinc finger occupies 152-212 (DSEATVCMRC…ICDFCYDLLS (61 aa)). 8 residues coordinate Zn(2+): C158, C161, C175, C178, C183, C186, C204, and C207. Polar residues predominate over residues 221-233 (PTRSDSYSQSLKS). The segment at 221–249 (PTRSDSYSQSLKSPLNDASDDDDDDDSSD) is disordered. A compositionally biased stretch (acidic residues) spans 238–249 (ASDDDDDDDSSD). A phosphoserine mark is found at S239 and S248.

In terms of assembly, may interact with EEA1. Expressed in brain, stomach and thymus, as well as in kidney, spleen, and skeletal muscle. Also expressed in peripheral blood mononuclear cells and dendritic cells.

It localises to the early endosome membrane. Its subcellular location is the endoplasmic reticulum. May play a role in early endosome fusion upstream of RAB5, hence regulating receptor trafficking and fluid-phase transport. Enhances cellular sensitivity to TNF-induced apoptosis. The sequence is that of Pleckstrin homology domain-containing family F member 2 (Plekhf2) from Mus musculus (Mouse).